Consider the following 360-residue polypeptide: Mitogen-activated protein kinase 14 (360 aa).

Ser-2 carries the post-translational modification N-acetylserine. At Ser-2 the chain carries Phosphoserine. Thr-16 carries the phosphothreonine modification. The region spanning 24 to 308 is the Protein kinase domain; the sequence is YQNLSPVGSG…AAQALAHAYF (285 aa). ATP contacts are provided by residues 30–38 and Lys-53; that span reads VGSGAYGSV. Position 53 is an N6-acetyllysine (Lys-53). Catalysis depends on Asp-150, which acts as the Proton acceptor. Lys-152 carries the post-translational modification N6-acetyllysine. Thr-180 bears the Phosphothreonine; by MAP2K3, MAP2K4, MAP2K6 and autocatalysis mark. Residue Tyr-182 is modified to Phosphotyrosine; by MAP2K3, MAP2K4, MAP2K6 and autocatalysis. Thr-263 carries the post-translational modification Phosphothreonine. Tyr-323 carries the phosphotyrosine; by ZAP70 modification.

Belongs to the protein kinase superfamily. CMGC Ser/Thr protein kinase family. MAP kinase subfamily. Component of a signaling complex containing at least AKAP13, PKN1, MAPK14, ZAK and MAP2K3. Within this complex, AKAP13 interacts directly with PKN1, which in turn recruits MAPK14, MAP2K3 and ZAK. Binds to a kinase interaction motif within the protein tyrosine phosphatase, PTPRR. This interaction retains MAPK14 in the cytoplasm and prevents nuclear accumulation. Interacts with SPAG9 and GADD45A. Interacts with CDC25B, CDC25C, DUSP1, DUSP10, DUSP16, NP60, SUPT20H and TAB1. Interacts with casein kinase II subunits CSNK2A1 and CSNK2B. Interacts with PPM1D. Interacts with CDK5RAP3; recruits PPM1D to MAPK14 and may regulate its dephosphorylation. Interacts with DUSP2; this interaction does not lead to catalytic activation of DUSP2 and dephosphrylation of MAPK14. Mg(2+) serves as cofactor. Dually phosphorylated on Thr-180 and Tyr-182 by the MAP2Ks MAP2K3/MKK3, MAP2K4/MKK4 and MAP2K6/MKK6 in response to inflammatory cytokines, environmental stress or growth factors, which activates the enzyme. Dual phosphorylation can also be mediated by TAB1-mediated autophosphorylation. TCR engagement in T-cells also leads to Tyr-323 phosphorylation by ZAP70. Dephosphorylated and inactivated by DUPS1, DUSP10 and DUSP16. PPM1D also mediates dephosphorylation and inactivation of MAPK14. Post-translationally, acetylated at Lys-53 and Lys-152 by KAT2B and EP300. Acetylation at Lys-53 increases the affinity for ATP and enhances kinase activity. Lys-53 and Lys-152 are deacetylated by HDAC3. In terms of processing, ubiquitinated. Ubiquitination leads to degradation by the proteasome pathway.

It localises to the cytoplasm. Its subcellular location is the nucleus. The catalysed reaction is L-seryl-[protein] + ATP = O-phospho-L-seryl-[protein] + ADP + H(+). It carries out the reaction L-threonyl-[protein] + ATP = O-phospho-L-threonyl-[protein] + ADP + H(+). With respect to regulation, activated by cell stresses such as DNA damage, heat shock, osmotic shock, anisomycin and sodium arsenite, as well as pro-inflammatory stimuli such as bacterial lipopolysaccharide (LPS) and interleukin-1. Activation occurs through dual phosphorylation of Thr-180 and Tyr-182 by either of two dual specificity kinases, MAP2K3/MKK3 or MAP2K6/MKK6, and potentially also MAP2K4/MKK4, as well as by TAB1-mediated autophosphorylation. MAPK14 phosphorylated on both Thr-180 and Tyr-182 is 10-20-fold more active than MAPK14 phosphorylated only on Thr-180, whereas MAPK14 phosphorylated on Tyr-182 alone is inactive. whereas Thr-180 is necessary for catalysis, Tyr-182 may be required for auto-activation and substrate recognition. Phosphorylated at Tyr-323 by ZAP70 in an alternative activation pathway in response to TCR signaling in T-cells. This alternative pathway is inhibited by GADD45A. Inhibited by dual specificity phosphatases, such as DUSP1, DUSP10, and DUSP16. Specifically inhibited by the binding of pyridinyl-imidazole compounds, which are cytokine-suppressive anti-inflammatory drugs (CSAID). SB203580 is an inhibitor of MAPK14. In terms of biological role, serine/threonine kinase which acts as an essential component of the MAP kinase signal transduction pathway. MAPK14 is one of the four p38 MAPKs which play an important role in the cascades of cellular responses evoked by extracellular stimuli such as pro-inflammatory cytokines or physical stress leading to direct activation of transcription factors. Accordingly, p38 MAPKs phosphorylate a broad range of proteins and it has been estimated that they may have approximately 200 to 300 substrates each. Some of the targets are downstream kinases which are activated through phosphorylation and further phosphorylate additional targets. RPS6KA5/MSK1 and RPS6KA4/MSK2 can directly phosphorylate and activate transcription factors such as CREB1, ATF1, the NF-kappa-B isoform RELA/NFKB3, STAT1 and STAT3, but can also phosphorylate histone H3 and the nucleosomal protein HMGN1. RPS6KA5/MSK1 and RPS6KA4/MSK2 play important roles in the rapid induction of immediate-early genes in response to stress or mitogenic stimuli, either by inducing chromatin remodeling or by recruiting the transcription machinery. On the other hand, two other kinase targets, MAPKAPK2/MK2 and MAPKAPK3/MK3, participate in the control of gene expression mostly at the post-transcriptional level, by phosphorylating ZFP36 (tristetraprolin) and ELAVL1, and by regulating EEF2K, which is important for the elongation of mRNA during translation. MKNK1/MNK1 and MKNK2/MNK2, two other kinases activated by p38 MAPKs, regulate protein synthesis by phosphorylating the initiation factor EIF4E2. MAPK14 also interacts with casein kinase II, leading to its activation through autophosphorylation and further phosphorylation of TP53/p53. In the cytoplasm, the p38 MAPK pathway is an important regulator of protein turnover. For example, CFLAR is an inhibitor of TNF-induced apoptosis whose proteasome-mediated degradation is regulated by p38 MAPK phosphorylation. In a similar way, MAPK14 phosphorylates the ubiquitin ligase SIAH2, regulating its activity towards EGLN3. MAPK14 may also inhibit the lysosomal degradation pathway of autophagy by interfering with the intracellular trafficking of the transmembrane protein ATG9. Another function of MAPK14 is to regulate the endocytosis of membrane receptors by different mechanisms that impinge on the small GTPase RAB5A. In addition, clathrin-mediated EGFR internalization induced by inflammatory cytokines and UV irradiation depends on MAPK14-mediated phosphorylation of EGFR itself as well as of RAB5A effectors. Ectodomain shedding of transmembrane proteins is regulated by p38 MAPKs as well. In response to inflammatory stimuli, p38 MAPKs phosphorylate the membrane-associated metalloprotease ADAM17. Such phosphorylation is required for ADAM17-mediated ectodomain shedding of TGF-alpha family ligands, which results in the activation of EGFR signaling and cell proliferation. Another p38 MAPK substrate is FGFR1. FGFR1 can be translocated from the extracellular space into the cytosol and nucleus of target cells, and regulates processes such as rRNA synthesis and cell growth. FGFR1 translocation requires p38 MAPK activation. In the nucleus, many transcription factors are phosphorylated and activated by p38 MAPKs in response to different stimuli. Classical examples include ATF1, ATF2, ATF6, ELK1, PTPRH, DDIT3, TP53/p53 and MEF2C and MEF2A. The p38 MAPKs are emerging as important modulators of gene expression by regulating chromatin modifiers and remodelers. The promoters of several genes involved in the inflammatory response, such as IL6, IL8 and IL12B, display a p38 MAPK-dependent enrichment of histone H3 phosphorylation on 'Ser-10' (H3S10ph) in LPS-stimulated myeloid cells. This phosphorylation enhances the accessibility of the cryptic NF-kappa-B-binding sites marking promoters for increased NF-kappa-B recruitment. Phosphorylates CDC25B and CDC25C which is required for binding to 14-3-3 proteins and leads to initiation of a G2 delay after ultraviolet radiation. Phosphorylates TIAR following DNA damage, releasing TIAR from GADD45A mRNA and preventing mRNA degradation. The p38 MAPKs may also have kinase-independent roles, which are thought to be due to the binding to targets in the absence of phosphorylation. Protein O-Glc-N-acylation catalyzed by the OGT is regulated by MAPK14, and, although OGT does not seem to be phosphorylated by MAPK14, their interaction increases upon MAPK14 activation induced by glucose deprivation. This interaction may regulate OGT activity by recruiting it to specific targets such as neurofilament H, stimulating its O-Glc-N-acylation. Required in mid-fetal development for the growth of embryo-derived blood vessels in the labyrinth layer of the placenta. Also plays an essential role in developmental and stress-induced erythropoiesis, through regulation of EPO gene expression. Phosphorylates S100A9 at 'Thr-113'. The polypeptide is Mitogen-activated protein kinase 14 (Pan troglodytes (Chimpanzee)).